Reading from the N-terminus, the 259-residue chain is Proteasome subunit alpha (259 aa).

Low complexity predominate over residues 233-243 (PAAPAAASESA). The tract at residues 233 to 259 (PAAPAAASESAPEPKPDTETKPADPQD) is disordered. A compositionally biased stretch (basic and acidic residues) spans 244–259 (PEPKPDTETKPADPQD).

Belongs to the peptidase T1A family. In terms of assembly, the 20S proteasome core is composed of 14 alpha and 14 beta subunits that assemble into four stacked heptameric rings, resulting in a barrel-shaped structure. The two inner rings, each composed of seven catalytic beta subunits, are sandwiched by two outer rings, each composed of seven alpha subunits. The catalytic chamber with the active sites is on the inside of the barrel. Has a gated structure, the ends of the cylinder being occluded by the N-termini of the alpha-subunits. Is capped by the proteasome-associated ATPase, ARC.

The protein resides in the cytoplasm. The protein operates within protein degradation; proteasomal Pup-dependent pathway. The formation of the proteasomal ATPase ARC-20S proteasome complex, likely via the docking of the C-termini of ARC into the intersubunit pockets in the alpha-rings, may trigger opening of the gate for substrate entry. Interconversion between the open-gate and close-gate conformations leads to a dynamic regulation of the 20S proteasome proteolysis activity. Component of the proteasome core, a large protease complex with broad specificity involved in protein degradation. This is Proteasome subunit alpha from Rhodococcus opacus (strain B4).